A 350-amino-acid chain; its full sequence is tRNA uridine(34) hydroxylase (350 aa).

One can recognise a Rhodanese domain in the interval 146–240; it reads DDPDAVFIDM…YARRAREQGL (95 aa). Cys-200 acts as the Cysteine persulfide intermediate in catalysis. Positions 319–328 are enriched in basic and acidic residues; sequence RRRRAGRENG. Positions 319–350 are disordered; sequence RRRRAGRENGNKIFNKSRGRLNSKLSIPDPAE.

It belongs to the TrhO family.

It carries out the reaction uridine(34) in tRNA + AH2 + O2 = 5-hydroxyuridine(34) in tRNA + A + H2O. Its function is as follows. Catalyzes oxygen-dependent 5-hydroxyuridine (ho5U) modification at position 34 in tRNAs. This is tRNA uridine(34) hydroxylase from Salmonella typhi.